The sequence spans 85 residues: DNA-directed RNA polymerase subunit Rpo11 (85 aa).

The protein belongs to the archaeal Rpo11/eukaryotic RPB11/RPC19 RNA polymerase subunit family. In terms of assembly, part of the RNA polymerase complex.

Its subcellular location is the cytoplasm. It carries out the reaction RNA(n) + a ribonucleoside 5'-triphosphate = RNA(n+1) + diphosphate. In terms of biological role, DNA-dependent RNA polymerase (RNAP) catalyzes the transcription of DNA into RNA using the four ribonucleoside triphosphates as substrates. The polypeptide is DNA-directed RNA polymerase subunit Rpo11 (Methanothermobacter thermautotrophicus (strain ATCC 29096 / DSM 1053 / JCM 10044 / NBRC 100330 / Delta H) (Methanobacterium thermoautotrophicum)).